The sequence spans 466 residues: Chromosomal replication initiator protein DnaA (466 aa).

A domain I, interacts with DnaA modulators region spans residues 1-77; that stretch reads MSQEIWADVL…GAEHPQVEFQ (77 aa). The interval 77-121 is domain II; it reads QVLPAAQDALLLPNDPPPAPEAAAPTPKTKAAPTPPPSTPGDNRK. Positions 87-122 are disordered; it reads LLPNDPPPAPEAAAPTPKTKAAPTPPPSTPGDNRKT. The span at 97 to 108 shows a compositional bias: low complexity; sequence EAAAPTPKTKAA. The domain III, AAA+ region stretch occupies residues 122–338; it reads TLNPKYTFEN…GALMRVVAFA (217 aa). The ATP site is built by Gly-166, Gly-168, Lys-169, and Thr-170. Positions 339–466 are domain IV, binds dsDNA; sequence SLNNVPFSRA…GKEEEEEVGA (128 aa).

It belongs to the DnaA family. As to quaternary structure, oligomerizes as a right-handed, spiral filament on DNA at oriC.

Its subcellular location is the cytoplasm. In terms of biological role, plays an essential role in the initiation and regulation of chromosomal replication. ATP-DnaA binds to the origin of replication (oriC) to initiate formation of the DNA replication initiation complex once per cell cycle. Binds the DnaA box (a 9 base pair repeat at the origin) and separates the double-stranded (ds)DNA. Forms a right-handed helical filament on oriC DNA; dsDNA binds to the exterior of the filament while single-stranded (ss)DNA is stabiized in the filament's interior. The ATP-DnaA-oriC complex binds and stabilizes one strand of the AT-rich DNA unwinding element (DUE), permitting loading of DNA polymerase. After initiation quickly degrades to an ADP-DnaA complex that is not apt for DNA replication. Binds acidic phospholipids. Its function is as follows. Strand separation requires the DnaA boxes and adjacent DnaA-trio motifs but works equally well with ADP or ATP. The polypeptide is Chromosomal replication initiator protein DnaA (Deinococcus radiodurans (strain ATCC 13939 / DSM 20539 / JCM 16871 / CCUG 27074 / LMG 4051 / NBRC 15346 / NCIMB 9279 / VKM B-1422 / R1)).